Reading from the N-terminus, the 102-residue chain is Large ribosomal subunit protein bL28 (102 aa).

Residues 1–20 (MSNSCDLTGHGWQNGNMVSH) show a composition bias toward polar residues. Residues 1–27 (MSNSCDLTGHGWQNGNMVSHSNRKTKK) are disordered.

It belongs to the bacterial ribosomal protein bL28 family.

This is Large ribosomal subunit protein bL28 from Neorickettsia sennetsu (strain ATCC VR-367 / Miyayama) (Ehrlichia sennetsu).